The following is a 673-amino-acid chain: Beta-galactosidase 8 (673 aa).

The N-terminal stretch at 1-20 (MGPSRSFQNLLLLLLPLALA) is a signal peptide. Asparagine 38 carries an N-linked (GlcNAc...) asparagine glycan. Glutamate 189 serves as the catalytic Proton donor. N-linked (GlcNAc...) asparagine glycosylation occurs at asparagine 230. Glutamate 272 functions as the Nucleophile in the catalytic mechanism. N-linked (GlcNAc...) asparagine glycans are attached at residues asparagine 304, asparagine 329, asparagine 401, asparagine 489, and asparagine 540.

Belongs to the glycosyl hydrolase 35 family.

Its subcellular location is the secreted. The protein resides in the extracellular space. It localises to the apoplast. It catalyses the reaction Hydrolysis of terminal non-reducing beta-D-galactose residues in beta-D-galactosides.. This is Beta-galactosidase 8 from Oryza sativa subsp. japonica (Rice).